We begin with the raw amino-acid sequence, 187 residues long: UPF0301 protein Spro_4027 (187 aa).

The protein belongs to the UPF0301 (AlgH) family.

The polypeptide is UPF0301 protein Spro_4027 (Serratia proteamaculans (strain 568)).